The chain runs to 600 residues: UvrABC system protein C (600 aa).

The 79-residue stretch at 16–94 (EKPGCYQYFD…IKEYQPRYNV (79 aa)) folds into the GIY-YIG domain. The region spanning 208–243 (HRLVRMYRDRMQAYSEELRFEEAQICKERIELLERY) is the UVR domain.

The protein belongs to the UvrC family. Interacts with UvrB in an incision complex.

Its subcellular location is the cytoplasm. The UvrABC repair system catalyzes the recognition and processing of DNA lesions. UvrC both incises the 5' and 3' sides of the lesion. The N-terminal half is responsible for the 3' incision and the C-terminal half is responsible for the 5' incision. In Porphyromonas gingivalis (strain ATCC 33277 / DSM 20709 / CIP 103683 / JCM 12257 / NCTC 11834 / 2561), this protein is UvrABC system protein C.